A 156-amino-acid polypeptide reads, in one-letter code: Movement protein P17 (156 aa).

Positions 38-54 (AEDAEEEAIAAQEELEF) are homodimerization. Disordered regions lie at residues 55–80 (PEDE…EVSP) and 131–156 (AKYH…IKRG). Positions 57–156 (DEAQARHSCL…RAAPKLIKRG (100 aa)) are RNA-binding. 4 positions are modified to phosphoserine: S71, S79, S137, and S140. Positions 144 to 156 (KLRRAAPKLIKRG) are enriched in basic residues.

This sequence belongs to the polerovirus movement protein family. Homodimer. Heterodimer with movement protein P3a. Expressed as a nonphosphorylated 20kDa form and a phosphorylated 22kDa form. Phosphorylated by a host PKC-related kinase. Serine phosphorylation is required for plamodesma targeting.

The protein localises to the host cell junction. The protein resides in the host plasmodesma. It is found in the host mitochondrion outer membrane. It localises to the host Golgi apparatus. Its subcellular location is the host chloroplast envelope. In terms of biological role, together with movement protein P3a, facilitates long-distance movement of virions in host. Transports viral genome to neighboring plant cells directly through plasmosdesmata, without any budding. The movement protein allows efficient cell to cell propagation, by bypassing the host cell wall barrier. Binds ssRNA. The sequence is that of Movement protein P17 from Solanum tuberosum (Potato).